A 434-amino-acid chain; its full sequence is Adenylosuccinate synthetase (434 aa).

Residues 25 to 31 and 53 to 55 contribute to the GTP site; these read GDEGKGK and GHT. The active-site Proton acceptor is Asp-26. 2 residues coordinate Mg(2+): Asp-26 and Gly-53. Residues 26–29, 51–54, Thr-142, Arg-156, Asn-233, Thr-248, and Arg-312 each bind IMP; these read DEGK and NAGH. Catalysis depends on His-54, which acts as the Proton donor. Residue 308–314 participates in substrate binding; the sequence is VTTGRKR. Residues Arg-314, 340 to 342, and 422 to 424 contribute to the GTP site; these read KLD and GVG.

This sequence belongs to the adenylosuccinate synthetase family. Homodimer. It depends on Mg(2+) as a cofactor.

Its subcellular location is the cytoplasm. The catalysed reaction is IMP + L-aspartate + GTP = N(6)-(1,2-dicarboxyethyl)-AMP + GDP + phosphate + 2 H(+). It functions in the pathway purine metabolism; AMP biosynthesis via de novo pathway; AMP from IMP: step 1/2. In terms of biological role, plays an important role in the de novo pathway and in the salvage pathway of purine nucleotide biosynthesis. Catalyzes the first committed step in the biosynthesis of AMP from IMP. This chain is Adenylosuccinate synthetase, found in Schizosaccharomyces japonicus (strain yFS275 / FY16936) (Fission yeast).